Reading from the N-terminus, the 319-residue chain is MKRIAILTSGGDAPGMNAATRAVVRKAIYEGLEVYGINYGFLGLVNGDIRKLELGSVGDLLHRGGTFLYSARYPEFATEEGQLKGIEQLKKHQIDGLVVIGGDGSYHGAEALTKRGFPTIGIPGTIDNDISGTDFTIGFDTALNTVLDALDKIRDTATSHERTFIIEVMGRDAGDIALWSGLAGGAEAIIVPEESFNMDDVVDRLNKGRERGKKHSIIVVAEGVMSGNEFAKQLAEYGDYHARVTVLGHVQRGGSPTAFDRVLASRLGARAVELLLENRGGLAVGIRENRIVENNIGEILKEKHTLDQKLFDLASILSI.

Gly-11 is a binding site for ATP. Residue Arg-21 to Arg-25 participates in ADP binding. ATP contacts are provided by residues Arg-72–Tyr-73 and Gly-102–Ser-105. Asp-103 provides a ligand contact to Mg(2+). Residue Thr-125 to Asp-127 coordinates substrate. Asp-127 acts as the Proton acceptor in catalysis. Arg-154 lines the ADP pocket. Residues Arg-162 and Met-169–Arg-171 each bind substrate. Residues Gly-185 to Glu-187, Arg-211, and Lys-213 to His-215 each bind ADP. Substrate contacts are provided by residues Glu-222, Arg-243, and His-249–Arg-252.

It belongs to the phosphofructokinase type A (PFKA) family. ATP-dependent PFK group I subfamily. Prokaryotic clade 'B1' sub-subfamily. As to quaternary structure, homotetramer. It depends on Mg(2+) as a cofactor.

The protein localises to the cytoplasm. It catalyses the reaction beta-D-fructose 6-phosphate + ATP = beta-D-fructose 1,6-bisphosphate + ADP + H(+). It participates in carbohydrate degradation; glycolysis; D-glyceraldehyde 3-phosphate and glycerone phosphate from D-glucose: step 3/4. Allosterically activated by ADP and other diphosphonucleosides, and allosterically inhibited by phosphoenolpyruvate. Its function is as follows. Catalyzes the phosphorylation of D-fructose 6-phosphate to fructose 1,6-bisphosphate by ATP, the first committing step of glycolysis. The polypeptide is ATP-dependent 6-phosphofructokinase (Listeria welshimeri serovar 6b (strain ATCC 35897 / DSM 20650 / CCUG 15529 / CIP 8149 / NCTC 11857 / SLCC 5334 / V8)).